The primary structure comprises 473 residues: 3-isopropylmalate dehydratase large subunit (473 aa).

3 residues coordinate [4Fe-4S] cluster: Cys354, Cys414, and Cys417.

This sequence belongs to the aconitase/IPM isomerase family. LeuC type 1 subfamily. As to quaternary structure, heterodimer of LeuC and LeuD. [4Fe-4S] cluster serves as cofactor.

It catalyses the reaction (2R,3S)-3-isopropylmalate = (2S)-2-isopropylmalate. The protein operates within amino-acid biosynthesis; L-leucine biosynthesis; L-leucine from 3-methyl-2-oxobutanoate: step 2/4. In terms of biological role, catalyzes the isomerization between 2-isopropylmalate and 3-isopropylmalate, via the formation of 2-isopropylmaleate. The sequence is that of 3-isopropylmalate dehydratase large subunit from Mycobacterium marinum (strain ATCC BAA-535 / M).